The following is a 291-amino-acid chain: Sulfate transport system permease protein CysW (291 aa).

Residues 1-22 lie on the Cytoplasmic side of the membrane; it reads MAEVTQLKRYDARPINWGKWFL. The chain crosses the membrane as a helical span at residues 23–43; it reads IGIGMLVSAFILLVPMIYIFV. The Periplasmic portion of the chain corresponds to 44 to 69; it reads QAFSKGLMPVLQNLADPDMLHAIWLT. The 205-residue stretch at 66–270 folds into the ABC transmembrane type-1 domain; sequence IWLTVMIALI…MAIITLFLKS (205 aa). The chain crosses the membrane as a helical span at residues 70-90; the sequence is VMIALIAVPVNLVFGILLAWL. At 91–104 the chain is on the cytoplasmic side; sequence VTRFNFPGRQLLLT. Residues 105–125 traverse the membrane as a helical segment; that stretch reads LLDIPFAVSPVVAGLVYLLFY. The Periplasmic segment spans residues 126 to 141; sequence GSNGPLGGWLDEHNLQ. The chain crosses the membrane as a helical span at residues 142 to 162; that stretch reads IMFSWPGMVLVTIFVTCPFVV. Over 163 to 200 the chain is Cytoplasmic; it reads RELVPVMLSQGSQEDEAAILLGASGWQMFRRVTLPNIR. A helical transmembrane segment spans residues 201-221; it reads WALLYGVVLTNARAIGEFGAV. Topologically, residues 222-247 are periplasmic; that stretch reads SVVSGSIRGETLSLPLQIELLEQDYN. Residues 248-268 form a helical membrane-spanning segment; sequence TVGSFTAAALLTLMAIITLFL. The Cytoplasmic segment spans residues 269-291; sequence KSMLQWRLENQEKRAQQEEHHEH.

It belongs to the binding-protein-dependent transport system permease family. CysTW subfamily. In terms of assembly, the complex is composed of two ATP-binding proteins (CysA), two transmembrane proteins (CysT and CysW) and a solute-binding protein (CysP).

The protein localises to the cell inner membrane. Its function is as follows. Part of the ABC transporter complex CysAWTP (TC 3.A.1.6.1) involved in sulfate/thiosulfate import. Probably responsible for the translocation of the substrate across the membrane. This is Sulfate transport system permease protein CysW (cysW) from Escherichia coli O6:H1 (strain CFT073 / ATCC 700928 / UPEC).